The following is a 127-amino-acid chain: Tyrosine-protein phosphatase 2 (127 aa).

Residues Gln-1–Val-127 form the Tyrosine-protein phosphatase domain. The span at Val-63 to Pro-81 shows a compositional bias: acidic residues. The tract at residues Val-63 to Glu-82 is disordered.

The protein belongs to the protein-tyrosine phosphatase family.

The catalysed reaction is O-phospho-L-tyrosyl-[protein] + H2O = L-tyrosyl-[protein] + phosphate. The polypeptide is Tyrosine-protein phosphatase 2 (STY-2) (Styela plicata (Wrinkled sea squirt)).